The following is a 137-amino-acid chain: Protein LTO1 homolog (137 aa).

Position 2 is an N-acetylalanine (Ala2). Ser4 bears the Phosphoserine mark. Residues 22-58 (GYREGYEEGSSLGVMEGRQHGTLHGAKIGSEIGCYQG) are deca-GX3 motif; required for interaction with YAE1 and the CIA complex.

This sequence belongs to the LTO1 family. As to quaternary structure, forms a complex with YAE1. Interacts with PYCR1 and PYCR2. Widely expressed. Highly expressed in placenta, kidney and skeletal muscle.

The protein resides in the nucleus. Its function is as follows. The complex LTO1:YAE1 functions as a target specific adapter that probably recruits apo-ABCE1 to the cytosolic iron-sulfur protein assembly (CIA) complex machinery. May be required for biogenesis of the large ribosomal subunit and initiation of translation. May play a role in the regulation of proline metabolism and ROS production. This chain is Protein LTO1 homolog, found in Homo sapiens (Human).